Here is a 319-residue protein sequence, read N- to C-terminus: MKEFIFPMKIYWEEKDKNYGRFVVEPLERGYGTTIGNALRRVLLSSIYGSAITAVKIEGVQHEFSTIEGVQEDVLQIIANLKNVRFDLKDSDLEILYLEKNAPGVVLASDIKTPPNVTIINKDAYIATINSANTTLKMEIRIERGKGYVMSDEMEQIGEAGWVVLDADFSPIKVAAFRVEATRVGDRTDYDKLTFELTTNGVVSPDTAIQQAVELIVKHMNMLTNISYEVPTLPEPMPPDELMEKLTFSIEELDISQRALNSLKRIGVTTIGELVQLTEDELKSSKNIGRKALTEIKEALKNMGFSLGMNIGEQRSSEV.

The segment at 1 to 227 (MKEFIFPMKI…KHMNMLTNIS (227 aa)) is alpha N-terminal domain (alpha-NTD). The segment at 242-319 (LMEKLTFSIE…NIGEQRSSEV (78 aa)) is alpha C-terminal domain (alpha-CTD).

This sequence belongs to the RNA polymerase alpha chain family. In terms of assembly, homodimer. The RNAP catalytic core consists of 2 alpha, 1 beta, 1 beta' and 1 omega subunit. When a sigma factor is associated with the core the holoenzyme is formed, which can initiate transcription.

The enzyme catalyses RNA(n) + a ribonucleoside 5'-triphosphate = RNA(n+1) + diphosphate. In terms of biological role, DNA-dependent RNA polymerase catalyzes the transcription of DNA into RNA using the four ribonucleoside triphosphates as substrates. The polypeptide is DNA-directed RNA polymerase subunit alpha (Hydrogenobaculum sp. (strain Y04AAS1)).